A 124-amino-acid polypeptide reads, in one-letter code: S-adenosylmethionine decarboxylase proenzyme (124 aa).

Ser-63 serves as the catalytic Schiff-base intermediate with substrate; via pyruvic acid. Position 63 is a pyruvic acid (Ser); by autocatalysis (Ser-63). Catalysis depends on His-68, which acts as the Proton acceptor; for processing activity. Residue Cys-83 is the Proton donor; for catalytic activity of the active site.

Belongs to the prokaryotic AdoMetDC family. Type 1 subfamily. As to quaternary structure, heterotetramer of two alpha and two beta chains arranged as a dimer of alpha/beta heterodimers. Pyruvate is required as a cofactor. Is synthesized initially as an inactive proenzyme. Formation of the active enzyme involves a self-maturation process in which the active site pyruvoyl group is generated from an internal serine residue via an autocatalytic post-translational modification. Two non-identical subunits are generated from the proenzyme in this reaction, and the pyruvate is formed at the N-terminus of the alpha chain, which is derived from the carboxyl end of the proenzyme. The post-translation cleavage follows an unusual pathway, termed non-hydrolytic serinolysis, in which the side chain hydroxyl group of the serine supplies its oxygen atom to form the C-terminus of the beta chain, while the remainder of the serine residue undergoes an oxidative deamination to produce ammonia and the pyruvoyl group blocking the N-terminus of the alpha chain.

It carries out the reaction S-adenosyl-L-methionine + H(+) = S-adenosyl 3-(methylsulfanyl)propylamine + CO2. It participates in amine and polyamine biosynthesis; S-adenosylmethioninamine biosynthesis; S-adenosylmethioninamine from S-adenosyl-L-methionine: step 1/1. Its function is as follows. Catalyzes the decarboxylation of S-adenosylmethionine to S-adenosylmethioninamine (dcAdoMet), the propylamine donor required for the synthesis of the polyamines spermine and spermidine from the diamine putrescine. This chain is S-adenosylmethionine decarboxylase proenzyme, found in Thermoanaerobacter pseudethanolicus (strain ATCC 33223 / 39E) (Clostridium thermohydrosulfuricum).